A 386-amino-acid polypeptide reads, in one-letter code: 8-amino-7-oxononanoate synthase (386 aa).

Arg-20 provides a ligand contact to substrate. 107 to 108 contributes to the pyridoxal 5'-phosphate binding site; that stretch reads GY. His-132 contacts substrate. The pyridoxal 5'-phosphate site is built by Ser-178, His-206, and Thr-234. The residue at position 237 (Lys-237) is an N6-(pyridoxal phosphate)lysine. Thr-351 contacts substrate.

Belongs to the class-II pyridoxal-phosphate-dependent aminotransferase family. BioF subfamily. As to quaternary structure, homodimer. It depends on pyridoxal 5'-phosphate as a cofactor.

The catalysed reaction is 6-carboxyhexanoyl-[ACP] + L-alanine + H(+) = (8S)-8-amino-7-oxononanoate + holo-[ACP] + CO2. The protein operates within cofactor biosynthesis; biotin biosynthesis. Catalyzes the decarboxylative condensation of pimeloyl-[acyl-carrier protein] and L-alanine to produce 8-amino-7-oxononanoate (AON), [acyl-carrier protein], and carbon dioxide. The protein is 8-amino-7-oxononanoate synthase of Aromatoleum aromaticum (strain DSM 19018 / LMG 30748 / EbN1) (Azoarcus sp. (strain EbN1)).